A 744-amino-acid polypeptide reads, in one-letter code: Tripartite motif-containing protein 2 (744 aa).

Phosphoserine is present on serine 10. Residues cysteine 23–arginine 64 form an RING-type zinc finger. The B box-type zinc finger occupies glycine 113 to leucine 154. Zn(2+) is bound by residues cysteine 118, histidine 121, cysteine 141, and histidine 146. The Filamin repeat unit spans residues threonine 320–valine 421. At threonine 371 the chain carries Phosphothreonine. Phosphoserine is present on residues serine 375, serine 424, and serine 428. Residues glutamate 432–lysine 462 form a disordered region. NHL repeat units lie at residues isoleucine 473–aspartate 516, lysine 520–aspartate 563, glycine 564–asparagine 605, valine 609–glutamate 652, methionine 656–serine 699, and glycine 700–leucine 743.

It belongs to the TRIM/RBCC family. In terms of assembly, forms homooligomers. Interacts with TRIM3; this interaction reduces TRIM2 activity. Interacts with myosin V; myosin V may not be a substrate for ubiquitination. Interacts with NEFL. Interacts with phosphorylated BCL2L11. Interacts with SIRPA. In terms of processing, RING-type zinc finger-dependent and UBE2D1-dependent autoubiquitination.

The protein resides in the cytoplasm. The enzyme catalyses S-ubiquitinyl-[E2 ubiquitin-conjugating enzyme]-L-cysteine + [acceptor protein]-L-lysine = [E2 ubiquitin-conjugating enzyme]-L-cysteine + N(6)-ubiquitinyl-[acceptor protein]-L-lysine.. It functions in the pathway protein modification; protein ubiquitination. UBE2D1-dependent E3 ubiquitin-protein ligase that mediates the ubiquitination of NEFL and of phosphorylated BCL2L11. Plays a neuroprotective function. May play a role in neuronal rapid ischemic tolerance. Plays a role in antiviral immunity and limits New World arenavirus infection independently of its ubiquitin ligase activity. The chain is Tripartite motif-containing protein 2 (TRIM2) from Bos taurus (Bovine).